Reading from the N-terminus, the 198-residue chain is Recombination protein RecR (198 aa).

The C4-type zinc-finger motif lies at 57–72 (CSICGNLTDEDPCAIC). The Toprim domain occupies 80–175 (STILIVEDSR…KVTRLARGLA (96 aa)).

Belongs to the RecR family.

Its function is as follows. May play a role in DNA repair. It seems to be involved in an RecBC-independent recombinational process of DNA repair. It may act with RecF and RecO. The chain is Recombination protein RecR from Streptococcus gordonii (strain Challis / ATCC 35105 / BCRC 15272 / CH1 / DL1 / V288).